A 767-amino-acid chain; its full sequence is MGSKRRFSSEHPDPVETSIPEQAAEIAEELSKQHPLPSEEPLVHHDAGEFKGLQRHHTSAEEAQKLEDGKINPFTGREFTPKYVDILKIRRELPVHAQRDEFLKLYQNNQIMVFVGETGSGKTTQIPQFVLFDEMPHLENTQVACTQPRRVAAMSVAQRVAEEMDVKLGEEVGYSIRFENKTSNKTILKYMTDGMLLREAMEDHDLSRYSCIILDEAHERTLATDILMGLLKQVVKRRPDLKIIIMSATLDAEKFQRYFNDAPLLAVPGRTYPVELYYTPEFQRDYLDSAIRTVLQIHATEEAGDILLFLTGEDEIEDAVRKISLEGDQLVREEGCGPLSVYPLYGSLPPHQQQRIFEPAPESHNGRPGRKVVISTNIAETSLTIDGIVYVVDPGFSKQKVYNPRIRVESLLVSPISKASAQQRAGRAGRTRPGKCFRLYTEEAFQKELIEQSYPEILRSNLSSTVLELKKLGIDDLVHFDFMDPPAPETMMRALEELNYLACLDDEGNLTPLGRLASQFPLDPMLAVMLIGSFEFQCSQEILTIVAMLSVPNVFIRPTKDKKRADDAKNIFAHPDGDHITLLNVYHAFKSDEAYEYGIHKWCRDHYLNYRSLSAADNIRSQLERLMNRYNLELNTTDYESPKYFDNIRKALASGFFMQVAKKRSGAKGYITVKDNQDVLIHPSTVLGHDAEWVIYNEFVLTSKNYIRTVTSVRPEWLIEIAPAYYDLSNFQKGDVKLSLERIKEKVDRLNELKQGKNKKKSKHSKK.

Residues 1 to 74 are disordered; sequence MGSKRRFSSE…KLEDGKINPF (74 aa). S8 and S9 each carry phosphoserine. Residues 58–70 show a composition bias toward basic and acidic residues; it reads TSAEEAQKLEDGK. A Helicase ATP-binding domain is found at 103-268; the sequence is LKLYQNNQIM…FNDAPLLAVP (166 aa). Residue 116–123 participates in ATP binding; that stretch reads GETGSGKT. A DEAH box motif is present at residues 215 to 218; sequence DEAH. Positions 293–473 constitute a Helicase C-terminal domain; sequence TVLQIHATEE…STVLELKKLG (181 aa).

This sequence belongs to the DEAD box helicase family. DEAH subfamily. DDX15/PRP43 sub-subfamily. Component of the NTR complex (NTC-related complex), composed of NTR1, NTR2 and PRP43. Interacts with NTR1 and NTR2. Interacts with SPP382.

Its subcellular location is the nucleus. It carries out the reaction ATP + H2O = ADP + phosphate + H(+). Pre-mRNA processing factor involved in disassembly of spliceosomes after the release of mature mRNA. In Saccharomyces cerevisiae (strain ATCC 204508 / S288c) (Baker's yeast), this protein is Pre-mRNA-splicing factor ATP-dependent RNA helicase PRP43 (PRP43).